The chain runs to 1481 residues: Cystic fibrosis transmembrane conductance regulator (1481 aa).

At 1-77 (MQRSPLEKAS…KLINALRRCF (77 aa)) the chain is on the cytoplasmic side. A helical membrane pass occupies residues 78-98 (FWRFTFYGILLYLGEVTKAVQ). The 285-residue stretch at 81–365 (FTFYGILLYL…WAVQTWYDSL (285 aa)) folds into the ABC transmembrane type-1 1 domain. Topologically, residues 99 to 122 (PLLLGRIIASYDPDNKTERSIAIY) are extracellular. Residues 123–146 (LGIGLCLLFIVRTLLLHPAIFGLH) traverse the membrane as a helical segment. Topologically, residues 147 to 195 (HIGMQMRIAMFSLIYKKTLKLSSRVLDKISIGQLVSLLSNNLNKFDEGL) are cytoplasmic. Residues 196–216 (ALAHFVWIAPLQVALLMGLIW) traverse the membrane as a helical segment. The Extracellular portion of the chain corresponds to 217–222 (ELLQAS). The helical transmembrane segment at 223–243 (AFCGLGFLIVLALFQAGLGRM) threads the bilayer. The Cytoplasmic segment spans residues 244-298 (MMKYRDQRAGKINERLVITSEMIENIQSVKAYCWEEAMEKIIENLRQTELKLTRK). A helical transmembrane segment spans residues 299 to 319 (AAYVRYFNSSAFFFSGFFVVF). At 320–339 (LSVLPYALIKGIVLRKIFTT) the chain is on the extracellular side. A helical membrane pass occupies residues 340 to 358 (ISFCIVLRMAVTRQFPWAV). Residues 359–858 (QTWYDSLGAI…YLRYITLHKS (500 aa)) are Cytoplasmic-facing. ATP-binding positions include W401, S434, 458-465 (GSTGAGKT), and Q493. The ABC transporter 1 domain maps to 423–646 (NGDDNLFFSN…RPDFSSKLMG (224 aa)). C524 carries the S-palmitoyl cysteine lipid modification. A phosphoserine mark is found at S549 and S660. The tract at residues 654–831 (SSERRNSILT…EEINEEDLKE (178 aa)) is disordered R region. S670 is subject to Phosphoserine; by PKA. Phosphoserine is present on S686. Residue K688 forms a Glycyl lysine isopeptide (Lys-Gly) (interchain with G-Cter in ubiquitin) linkage. Phosphoserine is present on residues S700 and S712. A Phosphothreonine modification is found at T717. A phosphoserine mark is found at S737, S753, S768, S790, S795, and S813. A helical transmembrane segment spans residues 859–879 (LIFVLIWCLVIFLAEVAASLV). The ABC transmembrane type-1 2 domain occupies 859-1155 (LIFVLIWCLV…AVNSSIDVDS (297 aa)). The Extracellular portion of the chain corresponds to 880 to 918 (VLWLLGNTPFQDKGNSTYSRNNSYAVIITNTSSYYVFYI). Residues N894, N900, and N909 are each glycosylated (N-linked (GlcNAc...) asparagine). The chain crosses the membrane as a discontinuously helical span at residues 919–939 (YVGVADTLLALGFFRGLPLVH). Topologically, residues 940–990 (TLITVSKMLHHKMLHSVLQAPMSTLNTLKAGGILNRFSKDIAILDDLLPLT) are cytoplasmic. The helical transmembrane segment at 991–1011 (IFDFIQLLLIVIGAIAVVSVL) threads the bilayer. Residues 1012 to 1013 (QP) are Extracellular-facing. Residues 1014–1034 (YIFLATVPVIAAFILLRAYFL) form a helical membrane-spanning segment. Over 1035–1095 (QTSQQLKQLE…TANWFLYLST (61 aa)) the chain is Cytoplasmic. Residues 1096–1116 (LRWFQMRIEMIFVIFFIAVTF) form a helical membrane-spanning segment. At 1117 to 1130 (ISILTTGEGEGTVG) the chain is on the extracellular side. The chain crosses the membrane as a helical span at residues 1131 to 1151 (IILTLAMNIMSTLQWAVNSSI). At 1152–1481 (DVDSLMRSVS…TEEEVQETRL (330 aa)) the chain is on the cytoplasmic side. Positions 1211-1444 (MTIKDLTAKY…KSLFRQAISH (234 aa)) constitute an ABC transporter 2 domain. ATP contacts are provided by residues Y1220 and 1245–1252 (GRTGSGKS). Residues 1387-1481 (RALKQAFADC…TEEEVQETRL (95 aa)) are interaction with GORASP2. Residue C1396 is the site of S-palmitoyl cysteine attachment. A phosphoserine mark is found at S1445 and S1457. The segment at 1453–1481 (HRNSSKYKSQPQIASLKEETEEEVQETRL) is disordered. A compositionally biased stretch (acidic residues) spans 1471 to 1481 (ETEEEVQETRL). Positions 1479-1481 (TRL) match the PDZ-binding motif.

The protein belongs to the ABC transporter superfamily. ABCC family. CFTR transporter (TC 3.A.1.202) subfamily. As to quaternary structure, monomer; does not require oligomerization for channel activity. May form oligomers in the membrane. Interacts with SLC26A3, SLC26A6 and NHERF1. Interacts with SHANK2. Interacts with MYO6. Interacts (via C-terminus) with GOPC (via PDZ domain); this promotes CFTR internalization and thereby decreases channel activity. Interacts with SLC4A7 through NHERF1. Found in a complex with MYO5B and RAB11A. Interacts with ANO1. Interacts with SLC26A8. Interacts with AHCYL1; the interaction increases CFTR activity. Interacts with CSE1L. The core-glycosylated form interacts with GORASP2 (via PDZ GRASP-type 1 domain) in respone to ER stress. Interacts with MARCHF2; the interaction leads to CFTR ubiqtuitination and degradation. Interacts with ADGRG2. N-glycosylated. In terms of processing, phosphorylated; cAMP treatment promotes phosphorylation and activates the channel. Dephosphorylation decreases the ATPase activity (in vitro). Phosphorylation at PKA sites activates the channel. Phosphorylation at PKC sites enhances the response to phosphorylation by PKA. Phosphorylated by AMPK; this inhibits channel activity. Post-translationally, ubiquitinated, leading to its degradation in the lysosome. Deubiquitination by USP10 in early endosomes enhances its endocytic recycling to the cell membrane. Ubiquitinated by RNF185 during ER stress. Ubiquitinated by MARCHF2.

It localises to the apical cell membrane. Its subcellular location is the early endosome membrane. It is found in the cell membrane. The protein localises to the recycling endosome membrane. The protein resides in the endoplasmic reticulum membrane. It localises to the nucleus. The enzyme catalyses ATP + H2O + closed Cl(-) channel = ADP + phosphate + open Cl(-) channel.. It carries out the reaction chloride(in) = chloride(out). The catalysed reaction is hydrogencarbonate(in) = hydrogencarbonate(out). It catalyses the reaction ATP + H2O = ADP + phosphate + H(+). Epithelial ion channel that plays an important role in the regulation of epithelial ion and water transport and fluid homeostasis. Mediates the transport of chloride ions across the cell membrane. Possesses an intrinsic ATPase activity and utilizes ATP to gate its channel; the passive flow of anions through the channel is gated by cycles of ATP binding and hydrolysis by the ATP-binding domains. The ion channel is also permeable to HCO(3)(-); selectivity depends on the extracellular chloride concentration. Exerts its function also by modulating the activity of other ion channels and transporters. Contributes to the regulation of the pH and the ion content of the epithelial fluid layer. Modulates the activity of the epithelial sodium channel (ENaC) complex, in part by regulating the cell surface expression of the ENaC complex. May regulate bicarbonate secretion and salvage in epithelial cells by regulating the transporter SLC4A7. Can inhibit the chloride channel activity of ANO1. Plays a role in the chloride and bicarbonate homeostasis during sperm epididymal maturation and capacitation. The chain is Cystic fibrosis transmembrane conductance regulator from Aotus nancymaae (Ma's night monkey).